The sequence spans 414 residues: MVNFDLGQVGEVFRRKDKGAIVSGDNPEEEEDVDASEFEEDEVKPVRTKNRRPKEDAFTQQRLAAINPVLTPRTVLPLYLLIAVVFVIVGGCILAQNSKVDEVTIYYQDCMTNATSSWSDIPSEHWQFVFHKYKTYNTAPQWRFVDDESDDFTKQRGTCQIRFTTPSDMKNNVYLNYVLEKFAANHRRYVLSFSEDQIRGEDASYETVHDATGINCKPLSKNADGKIYYPCGLIANSMFNDTFPLQLTNVGDTSNNYSLTNKGINWESDKKRYKKTKYNYTQIAPPPYWEKMYPDGYNETNIPDIQDWEEFQNWMRPGAFDKITKLIRINKNDTLPAGEYQLDIGLHWPVLEFNGKKGIYLTHGSHLGGRNPFLGIVYLIGGCICAAMALILLTFWLFGGRKIADASSLSWNMK.

The segment at 1–50 is required for localization to the plasma membrane; sequence MVNFDLGQVGEVFRRKDKGAIVSGDNPEEEEDVDASEFEEDEVKPVRTKN. Residues 1-74 lie on the Cytoplasmic side of the membrane; sequence MVNFDLGQVG…AINPVLTPRT (74 aa). Residues 20 to 52 are disordered; the sequence is AIVSGDNPEEEEDVDASEFEEDEVKPVRTKNRR. Residues 26-42 show a composition bias toward acidic residues; the sequence is NPEEEEDVDASEFEEDE. Phosphoserine is present on serine 36. The chain crosses the membrane as a helical span at residues 75-95; that stretch reads VLPLYLLIAVVFVIVGGCILA. Topologically, residues 96–372 are extracellular; sequence QNSKVDEVTI…HGSHLGGRNP (277 aa). Cystine bridges form between cysteine 110/cysteine 159 and cysteine 216/cysteine 231. Asparagine 113 carries an N-linked (GlcNAc...) asparagine glycan. N-linked (GlcNAc...) asparagine glycans are attached at residues asparagine 240, asparagine 256, asparagine 279, asparagine 298, and asparagine 332. A helical transmembrane segment spans residues 373–393; the sequence is FLGIVYLIGGCICAAMALILL. The Cytoplasmic portion of the chain corresponds to 394–414; that stretch reads TFWLFGGRKIADASSLSWNMK. Residues 400 to 414 form a required for localization to the plasma membrane region; it reads GRKIADASSLSWNMK.

The protein belongs to the CDC50/LEM3 family. In terms of assembly, component of a flippase complex consisting of DNF1 or DNF2 and LEM3. Interacts with DNF1; the interaction is direct and required for their mutual export from the endoplasmic reticulum. Interacts with DNF2; the interaction is direct and required for their mutual export from the endoplasmic reticulum.

The protein localises to the cell membrane. Its function is as follows. Accessory component of a P4-ATPase flippase complex which catalyzes the hydrolysis of ATP coupled to the transport of glucosylceramide, phosphatidylcholine, phosphatidylethanolamine, and small amounts of phosphatidylserine from the lumenal to the cytosolic leaflet of the cell membrane and ensures the maintenance of asymmetric distribution of phospholipids. Contributes to substrate binding and specificity of the P4-ATPase catalytic subunit. In Saccharomyces cerevisiae (strain ATCC 204508 / S288c) (Baker's yeast), this protein is Phospholipid-transporting ATPase accessory subunit LEM3.